The following is a 531-amino-acid chain: MTTKPERIIIFDTTLRDGEQCPGATLNIDEKLAIAKQLARLGVDIIEAGFAFASPGDFEAVHKIAQTVGTENGPVICSLARARHDDIKAAAEAIKPAAKGRIHTFIATSDIHLQYKLKKTRPEVIAIAEEMVAYAKSFTDDVEFSPEDAGRSDPEFLYQVLERAIAAGATTINIPDTVGYTTPSEFGAIIKGIKENVPNIDQAIISVHGHNDLGLAVANFLEAVKNGARQLECTINGIGERAGNAALEELVMAMHVRRQYFNPFLGRHPDSEEPLTNIDTKQIYKTSRLVSNLTGMLVQPNKAIVGANAFAHESGIHQDGVLKNKLTYEIMDAQLIGLTDNQIVLGKHSGRNAFRTRLKELGFELSETELNKAFVKFKEVADKKKEISDWDLEAIVNDEIQQAPDLFRVELVQVSCGSNARPTATVTLRTPDGEELTDAAIGTGPVDAVYKAINRVVNVPNQLIEFSVQSVTAGIDAIGEVTIRLRYESRVFSGHAANTDIIVASAQAYVNALNRLYASLQTQDKQTEVTA.

The Pyruvate carboxyltransferase domain occupies 8–284; that stretch reads IIIFDTTLRD…LTNIDTKQIY (277 aa). 4 residues coordinate Mn(2+): Asp17, His208, His210, and Asn244. A regulatory domain region spans residues 408–531; it reads RVELVQVSCG…TQDKQTEVTA (124 aa).

It belongs to the alpha-IPM synthase/homocitrate synthase family. LeuA type 1 subfamily. Homodimer. It depends on Mn(2+) as a cofactor.

The protein localises to the cytoplasm. It carries out the reaction 3-methyl-2-oxobutanoate + acetyl-CoA + H2O = (2S)-2-isopropylmalate + CoA + H(+). Its pathway is amino-acid biosynthesis; L-leucine biosynthesis; L-leucine from 3-methyl-2-oxobutanoate: step 1/4. Its function is as follows. Catalyzes the condensation of the acetyl group of acetyl-CoA with 3-methyl-2-oxobutanoate (2-ketoisovalerate) to form 3-carboxy-3-hydroxy-4-methylpentanoate (2-isopropylmalate). In Trichormus variabilis (strain ATCC 29413 / PCC 7937) (Anabaena variabilis), this protein is 2-isopropylmalate synthase.